We begin with the raw amino-acid sequence, 428 residues long: Adenylosuccinate synthetase (428 aa).

Residues 12–18 (GDEGKGK) and 40–42 (GHT) contribute to the GTP site. Asp13 (proton acceptor) is an active-site residue. 2 residues coordinate Mg(2+): Asp13 and Gly40. IMP contacts are provided by residues 13–16 (DEGK), 38–41 (NAGH), Thr129, Arg143, Gln224, Thr239, and Arg303. His41 serves as the catalytic Proton donor. 299-305 (VTTGRIR) provides a ligand contact to substrate. GTP is bound by residues Arg305, 331–333 (KVD), and 410–412 (AYG).

This sequence belongs to the adenylosuccinate synthetase family. In terms of assembly, homodimer. Mg(2+) serves as cofactor.

It localises to the cytoplasm. It catalyses the reaction IMP + L-aspartate + GTP = N(6)-(1,2-dicarboxyethyl)-AMP + GDP + phosphate + 2 H(+). Its pathway is purine metabolism; AMP biosynthesis via de novo pathway; AMP from IMP: step 1/2. In terms of biological role, plays an important role in the de novo pathway of purine nucleotide biosynthesis. Catalyzes the first committed step in the biosynthesis of AMP from IMP. The chain is Adenylosuccinate synthetase from Francisella philomiragia subsp. philomiragia (strain ATCC 25017 / CCUG 19701 / FSC 153 / O#319-036).